Reading from the N-terminus, the 122-residue chain is Sterile alpha motif domain-containing protein 13 (122 aa).

The 69-residue stretch at 51–119 (WAVMDVVNYF…KPLQTKHLKN (69 aa)) folds into the SAM domain.

This chain is Sterile alpha motif domain-containing protein 13 (SAMD13), found in Homo sapiens (Human).